Reading from the N-terminus, the 467-residue chain is MLATDSDPIVAIATASGRGGIGVVRLSLGRAGEAAARALSDALCGARLMPRHASYVPFLDGAGEPLDRGIALYFPAPHSYTGEHVIELQGHGGPIVLQLLLQRCLDAGRAHGLRLAEPGEFTRRAFLNDKLDLAQAEAVADLIEASTEAAARSAGRSLDGAFSRDIHALVDDVIALRMLVEATLDFPEEEIDFLEAADARGKLAHIRERLAHVLGDARQGALLREGLSVVLAGQPNVGKSSLLNALAGAELAIVTPIAGTTRDKVAQTIQIEGIPLHIIDTAGLRETEDEVEKIGIARTWGEIERADVVLHLLDARSGLGPGDEAIAARFPDGVPVVRVLNKTDLTGAPASVTRTGGGAARADVCEVRLSAKRGDGIDLLRGELLRIAGWQAGAESVYLARERHLIALRAAQAHLARAAEHAEQNAQALDLFAEELRLAQERLNSITGEFTSDDLLGVIFSRFCIGK.

Residues Arg-25, Glu-87, and Lys-130 each contribute to the (6S)-5-formyl-5,6,7,8-tetrahydrofolate site. The TrmE-type G domain maps to 226 to 389; sequence GLSVVLAGQP…LRGELLRIAG (164 aa). Asn-236 lines the K(+) pocket. Residues 236 to 241, 255 to 261, and 280 to 283 contribute to the GTP site; these read NVGKSS, TPIAGTT, and DTAG. Ser-240 is a binding site for Mg(2+). Thr-255, Ile-257, and Thr-260 together coordinate K(+). Residue Thr-261 participates in Mg(2+) binding. Lys-467 contacts (6S)-5-formyl-5,6,7,8-tetrahydrofolate.

It belongs to the TRAFAC class TrmE-Era-EngA-EngB-Septin-like GTPase superfamily. TrmE GTPase family. As to quaternary structure, homodimer. Heterotetramer of two MnmE and two MnmG subunits. The cofactor is K(+).

The protein localises to the cytoplasm. Functionally, exhibits a very high intrinsic GTPase hydrolysis rate. Involved in the addition of a carboxymethylaminomethyl (cmnm) group at the wobble position (U34) of certain tRNAs, forming tRNA-cmnm(5)s(2)U34. The sequence is that of tRNA modification GTPase MnmE from Burkholderia mallei (strain NCTC 10247).